A 274-amino-acid chain; its full sequence is Rhamnulose-1-phosphate aldolase (274 aa).

Glu-117 is a catalytic residue. Residues His-141, His-143, and His-212 each coordinate Zn(2+).

The protein belongs to the aldolase class II family. RhaD subfamily. As to quaternary structure, homotetramer. It depends on Zn(2+) as a cofactor.

It localises to the cytoplasm. The catalysed reaction is L-rhamnulose 1-phosphate = (S)-lactaldehyde + dihydroxyacetone phosphate. The protein operates within carbohydrate degradation; L-rhamnose degradation; glycerone phosphate from L-rhamnose: step 3/3. Catalyzes the reversible cleavage of L-rhamnulose-1-phosphate to dihydroxyacetone phosphate (DHAP) and L-lactaldehyde. The sequence is that of Rhamnulose-1-phosphate aldolase from Pectobacterium carotovorum subsp. carotovorum (strain PC1).